Here is a 412-residue protein sequence, read N- to C-terminus: UDP-galactose transporter homolog 1 (412 aa).

A helical membrane pass occupies residues V3–A23. The disordered stretch occupies residues F31–G51. The next 4 helical transmembrane spans lie at L58 to F78, L139 to L159, Y197 to S217, and G222 to L242. N-linked (GlcNAc...) asparagine glycosylation occurs at N244. 4 helical membrane-spanning segments follow: residues M262–L282, S325–F345, T355–F375, and L379–G399.

Belongs to the nucleotide-sugar transporter family. SLC35B subfamily.

It is found in the endoplasmic reticulum membrane. In terms of biological role, may be involved in specific transport of UDP-Gal from the cytosol to the Golgi lumen. Involved in the maintenance of optimal conditions for the folding of secretory pathway proteins in the endoplasmic reticulum. This Cryptococcus neoformans var. neoformans serotype D (strain JEC21 / ATCC MYA-565) (Filobasidiella neoformans) protein is UDP-galactose transporter homolog 1 (HUT1-A).